The primary structure comprises 437 residues: MQLGVRLRFQKFEYPEANPEALPEGIDPEEYIIGTYYMSFPKGMNPFEITQVLALEQSTGTWLPVPGETPEVRRKHVAKVVGVYEIPDYEIMVPQEVDWRNFIVQIAFPWRNIGSKLSMLFSTVVGNISMAPKLKLLDLRFPKEFVKGFKGPKFGIEGVRDVLGVKDRPLLNNMIKPDVYSPPDLGAKLAYEVARGGVDIIKDDELLANPEFNRIEERVPKFMEAIDRADEEKGEKTLYAVNVTADLPEVLENAERAIELGANCLLVNYLATGFPVLRALAEDESIKVPIMAHMDVAGAYYVSPISGVRSTLILGKLPRLAGADIVVYPAPYGKAPMMEEKYIEVAKQHRYPFYHIKPCFPMPSGGIAPIMVPKLVNTLGKDFVVAAGGGIHAHPDGPAAGARAFRQAIDAAMQGYTDLRKYAEENNLQELLKALQL.

Residue Lys-176 is the Proton acceptor of the active site. Lys-202, Asp-204, and Glu-205 together coordinate Mg(2+). Lys-202 is modified (N6-carboxylysine). His-293 acts as the Proton acceptor in catalysis.

Belongs to the RuBisCO large chain family. Type IV subfamily. Homodimer. It depends on Mg(2+) as a cofactor.

Its function is as follows. May be involved in sulfur metabolism and oxidative stress response. Does not show RuBisCO activity. The polypeptide is Ribulose bisphosphate carboxylase-like protein (Archaeoglobus fulgidus (strain ATCC 49558 / DSM 4304 / JCM 9628 / NBRC 100126 / VC-16)).